The sequence spans 293 residues: Acidic endochitinase (293 aa).

Positions 1 to 22 are cleaved as a signal peptide; that stretch reads MEKCFNIIPSLLLISLLIKSSN. The region spanning 24-293 is the GH18 domain; that stretch reads AGIAVYWGQN…GYSNAIKGSV (270 aa). 2 cysteine pairs are disulfide-bonded: cysteine 43–cysteine 90 and cysteine 73–cysteine 80. Glutamate 150 serves as the catalytic Proton donor. A disulfide bridge links cysteine 179 with cysteine 208.

The protein belongs to the glycosyl hydrolase 18 family. Chitinase class II subfamily.

The protein localises to the secreted. The protein resides in the extracellular space. It catalyses the reaction Random endo-hydrolysis of N-acetyl-beta-D-glucosaminide (1-&gt;4)-beta-linkages in chitin and chitodextrins.. In terms of biological role, this protein functions as a defense against chitin containing fungal pathogens. This chain is Acidic endochitinase, found in Cicer arietinum (Chickpea).